Reading from the N-terminus, the 405-residue chain is 3-isopropylmalate dehydrogenase (405 aa).

Position 86-104 (86-104) interacts with NAD(+); sequence GAANTVWTTPDGRTDVRPE. Residues R111, R121, R148, and D237 each coordinate substrate. Positions 237, 262, and 266 each coordinate Mg(2+). 301-312 provides a ligand contact to NAD(+); the sequence is GSAPDLGKQKVN. The interval 352–371 is disordered; sequence ADIGGSSSTSEVGDLLPTRS.

The protein belongs to the isocitrate and isopropylmalate dehydrogenases family. As to quaternary structure, homodimer. It depends on Mg(2+) as a cofactor. The cofactor is Mn(2+).

It localises to the cytoplasm. It catalyses the reaction (2R,3S)-3-isopropylmalate + NAD(+) = 4-methyl-2-oxopentanoate + CO2 + NADH. The protein operates within amino-acid biosynthesis; L-leucine biosynthesis; L-leucine from 3-methyl-2-oxobutanoate: step 3/4. Catalyzes the oxidation of 3-carboxy-2-hydroxy-4-methylpentanoate (3-isopropylmalate) to 3-carboxy-4-methyl-2-oxopentanoate. The product decarboxylates to 4-methyl-2 oxopentanoate. This is 3-isopropylmalate dehydrogenase (LEU2) from Yarrowia lipolytica (strain CLIB 122 / E 150) (Yeast).